Reading from the N-terminus, the 88-residue chain is Small ribosomal subunit protein uS12 (88 aa).

A disordered region spans residues arginine 1–glycine 24. Aspartate 81 is subject to 3-methylthioaspartic acid.

The protein belongs to the universal ribosomal protein uS12 family. In terms of assembly, part of the 30S ribosomal subunit. Contacts proteins S8 and S17. May interact with IF1 in the 30S initiation complex.

In terms of biological role, with S4 and S5 plays an important role in translational accuracy. Functionally, interacts with and stabilizes bases of the 16S rRNA that are involved in tRNA selection in the A site and with the mRNA backbone. Located at the interface of the 30S and 50S subunits, it traverses the body of the 30S subunit contacting proteins on the other side and probably holding the rRNA structure together. The combined cluster of proteins S8, S12 and S17 appears to hold together the shoulder and platform of the 30S subunit. The polypeptide is Small ribosomal subunit protein uS12 (rpsL) (Mycobacterium szulgai).